Reading from the N-terminus, the 222-residue chain is Histone H1.5 (222 aa).

The span at 1–16 (MSETAPAETTAPAPVE) shows a compositional bias: low complexity. Positions 1-55 (MSETAPAETTAPAPVEKSPAKKKTKKAGAAKRKATGPPVSELITKAVSASKERGG) are disordered. S2 bears the N-acetylserine mark. A Phosphoserine modification is found at S2. K17 is modified (N6-acetyllysine). S18 carries the phosphoserine modification. The span at 20–34 (AKKKTKKAGAAKRKA) shows a compositional bias: basic residues. An N6-methyllysine modification is found at K26. K33 carries the post-translational modification N6-(beta-hydroxybutyryl)lysine; alternate. N6-succinyllysine; alternate is present on K33. T35 is modified (phosphothreonine). In terms of domain architecture, H15 spans 35–108 (TGPPVSELIT…GASGSFKLNK (74 aa)). Residue K45 is modified to N6-acetyllysine. N6-(beta-hydroxybutyryl)lysine is present on K51. A Citrulline modification is found at R53. K63 carries the N6-(beta-hydroxybutyryl)lysine modification. An N6-acetyllysine modification is found at K74. N6-(beta-hydroxybutyryl)lysine is present on residues K84, K89, and K105. Residues 94-222 (QTKGTGASGS…KVKKAVSKKK (129 aa)) are disordered. Basic residues predominate over residues 118 to 129 (KAKKTGAAKAKK). 2 positions are modified to phosphothreonine: T134 and T151. Basic residues predominate over residues 136-157 (KKPKKTAGAKKTVKKTPKKAKK). The residue at position 164 (K164) is an N6-acetyllysine. The segment covering 165-183 (KVTKSPKKAKAAAKPKKAT) has biased composition (basic residues). Phosphoserine occurs at positions 169 and 185. Residues 190 to 222 (KAVKSKASKPKVTKPKAAKPKAAKVKKAVSKKK) show a composition bias toward basic residues.

Belongs to the histone H1/H5 family. As to quaternary structure, interacts with MSX1. H1 histones are progressively phosphorylated during the cell cycle, becoming maximally phosphorylated during late G2 phase and M phase, and being dephosphorylated sharply thereafter. In terms of processing, citrullination at Arg-53 (H1R54ci) by PADI4 takes place within the DNA-binding site of H1 and results in its displacement from chromatin and global chromatin decondensation, thereby promoting pluripotency and stem cell maintenance.

The protein resides in the nucleus. It localises to the chromosome. Functionally, histone H1 protein binds to linker DNA between nucleosomes forming the macromolecular structure known as the chromatin fiber. Histones H1 are necessary for the condensation of nucleosome chains into higher-order structured fibers. Also acts as a regulator of individual gene transcription through chromatin remodeling, nucleosome spacing and DNA methylation. This Rattus norvegicus (Rat) protein is Histone H1.5 (H1-5).